The chain runs to 620 residues: Glutathione-regulated potassium-efflux system protein KefC (620 aa).

A run of 12 helical transmembrane segments spans residues 4-24 (HTLI…PIAV), 26-46 (LGLG…PWGL), 54-74 (SILH…GLEL), 90-110 (GALQ…LLGL), 114-134 (VAEL…MQAM), 149-169 (FAVL…IPLL), 178-198 (MGAF…VVLL), 218-238 (VFSA…EEVG), 270-290 (GLLL…GTLL), 294-314 (LRIV…LWLI), 327-347 (WFAV…GAAQ), and 359-379 (SLTL…VILN). In terms of domain architecture, RCK N-terminal spans 399–518 (QPRVIIAGFG…AGVEKPERET (120 aa)). The interval 597-620 (GWQGTEEGKHTGNMADEPETKPSS) is disordered.

The protein belongs to the monovalent cation:proton antiporter 2 (CPA2) transporter (TC 2.A.37) family. KefC subfamily. In terms of assembly, homodimer. Interacts with the regulatory subunit KefF.

It localises to the cell inner membrane. Pore-forming subunit of a potassium efflux system that confers protection against electrophiles. Catalyzes K(+)/H(+) antiport. This Escherichia coli O7:K1 (strain IAI39 / ExPEC) protein is Glutathione-regulated potassium-efflux system protein KefC.